Consider the following 488-residue polypeptide: E3 ubiquitin-protein ligase TRIM34 (488 aa).

The RING-type zinc finger occupies 15–60 (CPICLELLTEPLSLDCGHSLCRACITVSNKEAVTSMGGKSSCPVCG). A B box-type zinc finger spans residues 92 to 134 (KKRDLCDHHGEKLLLFCKEDRKVICWLCERSQEHRGHHTVLTE). Zn(2+) contacts are provided by cysteine 97, histidine 100, cysteine 119, and histidine 125. Residues 131 to 239 (VLTEEVFKEC…VRELISDVEC (109 aa)) adopt a coiled-coil conformation. Residues 283-488 (LSRMLQMFRE…APMTLCPPSS (206 aa)) enclose the B30.2/SPRY domain.

It belongs to the TRIM/RBCC family. In terms of assembly, homotrimer. Interacts (via B-box and SPRY domain) with TRIM5. As to quaternary structure, (Microbial infection) Interacts (via the B30.2/SPRY domain) with HIV-1 capsid complexes. As to expression, is the most abundant form. It is highly expressed in the placenta, spleen, colon and peripheral blood leukocytes.

It localises to the cytoplasm. It is found in the mitochondrion. The catalysed reaction is S-ubiquitinyl-[E2 ubiquitin-conjugating enzyme]-L-cysteine + [acceptor protein]-L-lysine = [E2 ubiquitin-conjugating enzyme]-L-cysteine + N(6)-ubiquitinyl-[acceptor protein]-L-lysine.. It participates in protein modification; protein ubiquitination. In terms of biological role, functions as antiviral protein and contributes to the defense against retroviral infections. Acts as a capsid-specific restriction factor with the help of TRIM5 and prevents infection from non-host-adapted retroviruses. During influenza A virus infection, promotes programmed cell death by targeting ZBP1 for 'Lys-63'-linked polyubiquitination. In turn, promotes ZBP1 recruitment of RIPK3 to mediate virus-induced programmed necrosis. Negatively regulates the function of mitochondria by enhancing mitochondrial depolarization leading to cytochrome c release and mitochondria-dependent apoptosis. Also promotes the formation of multinucleated giant cells by means of cell fusion and phagocytosis in epithelial cells. The protein is E3 ubiquitin-protein ligase TRIM34 (TRIM34) of Homo sapiens (Human).